The sequence spans 264 residues: Mannose-specific lectin CEA (264 aa).

A signal peptide spans 1-23 (MAKLLLFLLPAILGLLVPRSAVA). Bulb-type lectin domains follow at residues 26-131 (TNYL…PWVP) and 145-252 (NNLL…PQAK). Residues 51 to 55 (QDDCN), Tyr59, Trp63, Gln64, 170 to 174 (QGDCN), Tyr178, and 182 to 185 (YGWQ) each bind beta-D-mannose. The Carbohydrate-binding motif 1 signature appears at 51–59 (QDDCNLVLY). 2 cysteine pairs are disulfide-bonded: Cys54/Cys74 and Cys173/Cys195. Positions 170–178 (QGDCNLVLY) match the Carbohydrate-binding motif 2 motif.

In terms of assembly, forms heterotetramer of 2 chains 1 and 2 chains 2 arranged as a dimer of chain 1 and chain 2 heterodimers.

The protein resides in the secreted. Its function is as follows. Mannose-specific lectin. Shows agglutinating activity towards erythrocytes from rabbit. Has insecticidal activity against cotton aphids and other hemipteran insects. In Colocasia esculenta (Wild taro), this protein is Mannose-specific lectin CEA.